The following is a 399-amino-acid chain: Glutathione S-transferase LANCL1 (399 aa).

Ala-2 carries the post-translational modification N-acetylalanine. Lys-142 is modified (N6-acetyllysine). Residue Cys-276 participates in Zn(2+) binding. Lys-317 provides a ligand contact to glutathione. Residues Cys-322 and His-323 each coordinate Zn(2+). 364–367 (RTAD) serves as a coordination point for glutathione.

It belongs to the LanC-like protein family. In terms of assembly, interacts with the C-terminal of STOM. Interacts with the EPS8 SH3 domain. Interaction with EPS8 is inhibited by glutathione binding. As to expression, detected in spinal cord (at protein level). Ubiquitous. Strongly expressed in brain, testis, alveolar macrophages and epithelial cells of the lung, kidney and intestine. Expression in brain increases during the first postnatal month and remaining high in adult.

It localises to the cytoplasm. The protein localises to the cell membrane. The enzyme catalyses RX + glutathione = an S-substituted glutathione + a halide anion + H(+). The catalysed reaction is 1-chloro-2,4-dinitrobenzene + glutathione = 2,4-dinitrophenyl-S-glutathione + chloride + H(+). Functions as a glutathione transferase. Catalyzes conjugation of the glutathione (GSH) to artificial substrates 1-chloro-2,4-dinitrobenzene (CDNB) and p-nitrophenyl acetate. Mitigates neuronal oxidative stress during normal postnatal development and in response to oxidative stresses probably through GSH antioxidant defense mechanism. May play a role in EPS8 signaling. Binds glutathione. This Mus musculus (Mouse) protein is Glutathione S-transferase LANCL1.